A 328-amino-acid polypeptide reads, in one-letter code: Glucokinase (328 aa).

ATP is bound at residue 16–21 (ADIGGT).

It belongs to the bacterial glucokinase family.

The protein resides in the cytoplasm. The enzyme catalyses D-glucose + ATP = D-glucose 6-phosphate + ADP + H(+). This chain is Glucokinase, found in Neisseria meningitidis serogroup C (strain 053442).